The primary structure comprises 380 residues: Cytochrome b (380 aa).

The next 4 membrane-spanning stretches (helical) occupy residues 34–54, 78–99, 114–134, and 179–199; these read FGSL…LLAA, WLIR…YLHI, WNTG…GYVL, and FFTL…IHLT. Residues H84 and H98 each coordinate heme b. The heme b site is built by H183 and H197. H202 lines the a ubiquinone pocket. The next 4 membrane-spanning stretches (helical) occupy residues 227-247, 289-309, 321-341, and 348-368; these read LKDT…ALFS, LGGV…PLLH, LFQL…WVGS, and FIII…ILFP.

It belongs to the cytochrome b family. In terms of assembly, the cytochrome bc1 complex contains 11 subunits: 3 respiratory subunits (MT-CYB, CYC1 and UQCRFS1), 2 core proteins (UQCRC1 and UQCRC2) and 6 low-molecular weight proteins (UQCRH/QCR6, UQCRB/QCR7, UQCRQ/QCR8, UQCR10/QCR9, UQCR11/QCR10 and a cleavage product of UQCRFS1). This cytochrome bc1 complex then forms a dimer. Heme b is required as a cofactor.

It localises to the mitochondrion inner membrane. Component of the ubiquinol-cytochrome c reductase complex (complex III or cytochrome b-c1 complex) that is part of the mitochondrial respiratory chain. The b-c1 complex mediates electron transfer from ubiquinol to cytochrome c. Contributes to the generation of a proton gradient across the mitochondrial membrane that is then used for ATP synthesis. In Grus nigricollis (Black-necked crane), this protein is Cytochrome b (MT-CYB).